Reading from the N-terminus, the 1248-residue chain is Period circadian protein homolog 2 (1248 aa).

The segment at 1-57 is disordered; that stretch reads MNGYVEFSPSPTKESVEPQPSQAVLQEDVDMSSGSSGHENCSMGRDSQGSDCDDNGK. 2 stretches are compositionally biased toward polar residues: residues 9–24 and 32–50; these read PSPT…SQAV and SSGS…SQGS. Positions 105–114 match the Nuclear export signal 1 motif; sequence LIRTLRELKV. Residues 175-242 enclose the PAS 1 domain; that stretch reads ITSEYIVKNA…FHSYTTPYKL (68 aa). An LXXLL motif is present at residues 302 to 306; the sequence is LCCLL. The PAS 2 domain maps to 315–381; sequence YEAPRIPPEK…MLAIHKKILQ (67 aa). Positions 389 to 432 constitute a PAC domain; the sequence is YSPIRFRARNGEYITLDTSWSSFINPWSRKISFIIGRHKVRVGP. Residues 456 to 465 carry the Nuclear export signal 2 motif; sequence LTEQIHRLLM. Disordered regions lie at residues 467-563 and 619-638; these read PVPH…SLPK and VSPG…VSSH. Residues 474–478 form an important for protein stability region; the sequence is SGYGS. Residues 506–706 are CSNK1E binding domain; sequence RKSGISKNGS…GAPGGLSQEK (201 aa). A compositionally biased stretch (polar residues) spans 510 to 521; it reads ISKNGSKTQTRS. Phosphoserine occurs at positions 521, 524, 527, and 540. Positions 523 to 534 are enriched in basic and acidic residues; that stretch reads FSHESGEQKEIA. Residues Ser-656, Ser-690, Ser-694, Ser-703, and Ser-755 each carry the phosphoserine modification. 2 disordered regions span residues 675–708 and 751–829; these read DKKP…EKGP and RAQA…PSAP. The Nuclear localization signal signature appears at 773–789; that stretch reads KKTGKNRKLKSKRVKTR. Basic residues predominate over residues 774-787; sequence KTGKNRKLKSKRVK. The segment covering 816-827 has biased composition (low complexity); the sequence is SPSDTSQSSCPS. An interaction with PPARG region spans residues 873–1058; that stretch reads DFAVQPLPLA…DLCSATGSAL (186 aa). Ser-930 carries the phosphoserine modification. The disordered stretch occupies residues 950–971; that stretch reads TPPAATVTSGRASPPLFQSRGS. Thr-955 is modified (phosphothreonine). Position 962 is a phosphoserine (Ser-962). A Nuclear export signal 3 motif is present at residues 974 to 981; that stretch reads LQLNLLQL. The segment at 984 to 1035 is disordered; that stretch reads APEGSTGAAGTSGTTGTAAAGLDCTPGTSRDRQPKAPSTCKEPSDTQNSDAL. Residues 987–1004 show a composition bias toward low complexity; sequence GSTGAAGTSGTTGTAAAG. Residues 1042 to 1046 carry the LXXLL motif; the sequence is LNLLL. Over residues 1057 to 1080 the composition is skewed to low complexity; sequence ALSGSGASATSDSLGSGSLGCDAS. A disordered region spans residues 1057-1113; it reads ALSGSGASATSDSLGSGSLGCDASRSGAGSSDTSHTSKYFGSIDSSENNHKAKVSTD. The span at 1083 to 1102 shows a compositional bias: polar residues; the sequence is GAGSSDTSHTSKYFGSIDSS. Over residues 1103–1112 the composition is skewed to basic and acidic residues; that stretch reads ENNHKAKVST. Ser-1117 bears the Phosphoserine mark. The interval 1148–1248 is CRY binding domain; it reads SRDLESVLRE…LTGPRIEAQT (101 aa). The segment at 1215–1248 is disordered; the sequence is PYEEDSPSPGLCDTSEAKEEEGEQLTGPRIEAQT.

In terms of assembly, homodimer. Component of the circadian core oscillator, which includes the CRY proteins, CLOCK or NPAS2, BMAL1 or BMAL2, CSNK1D and/or CSNK1E, TIMELESS, and the PER proteins. Interacts with CLOCK-BMAL1 (off DNA). Interacts with BMAL2. Interacts directly with PER1 and PER3, and through a C-terminal domain, with CRY1 and CRY2. Interacts (via PAS 2 domain) with TIMELESS. Interacts with NFIL3. Different large complexes have been identified with different repressive functions. The core of PER complexes is composed of at least PER1, PER2, PER3, CRY1, CRY2, CSNK1D and/or CSNK1E. The large PER complex involved in the repression of transcriptional termination is composed of at least PER2, CDK9, DDX5, DHX9, NCBP1 and POLR2A (active). The large PER complex involved in the histone deacetylation is composed of at least HDAC1, PER2, SFPQ and SIN3A. The large PER complex involved in the histone methylation is composed of at least PER2, CBX3, TRIM28, SUV39H1 and/or SUV39H2; CBX3 mediates the formation of the complex. Interacts with SETX; the interaction inhibits termination of circadian target genes. Interacts with the nuclear receptors HNF4A, NR1D1, NR4A2, RORA, PPARA, PPARG and THRA; the interaction with at least PPARG is ligand dependent. Interacts with PML. Interacts (phosphorylated) with BTRC and FBXW11; the interactions trigger proteasomal degradation. Interacts with NONO and SFPQ. Interacts with PRKCDBP. Interacts with MAGEL2. Interacts with MAP1LC3B. Interacts with HNF4A. Post-translationally, acetylated. Deacetylated by SIRT1, resulting in decreased protein stability. Deacetylated by SIRT6, preventing its degradation by the proteasome, resulting in increased protein stability. In terms of processing, phosphorylated by CSNK1E and CSNK1D. Phosphorylation results in PER2 protein degradation. May be dephosphorylated by PP1. Ubiquitinated, leading to its proteasomal degradation. Ubiquitination may be inhibited by CRY1. As to expression, expressed in the brain, mainly in the suprachiasmatic nucleus (SCN). Expression also found in the harderian gland, lung, eye, intestine, liver and skeletal muscle.

The protein resides in the nucleus. It localises to the cytoplasm. It is found in the perinuclear region. Functionally, transcriptional repressor which forms a core component of the circadian clock. The circadian clock, an internal time-keeping system, regulates various physiological processes through the generation of approximately 24 hour circadian rhythms in gene expression, which are translated into rhythms in metabolism and behavior. It is derived from the Latin roots 'circa' (about) and 'diem' (day) and acts as an important regulator of a wide array of physiological functions including metabolism, sleep, body temperature, blood pressure, endocrine, immune, cardiovascular, and renal function. Consists of two major components: the central clock, residing in the suprachiasmatic nucleus (SCN) of the brain, and the peripheral clocks that are present in nearly every tissue and organ system. Both the central and peripheral clocks can be reset by environmental cues, also known as Zeitgebers (German for 'timegivers'). The predominant Zeitgeber for the central clock is light, which is sensed by retina and signals directly to the SCN. The central clock entrains the peripheral clocks through neuronal and hormonal signals, body temperature and feeding-related cues, aligning all clocks with the external light/dark cycle. Circadian rhythms allow an organism to achieve temporal homeostasis with its environment at the molecular level by regulating gene expression to create a peak of protein expression once every 24 hours to control when a particular physiological process is most active with respect to the solar day. Transcription and translation of core clock components (CLOCK, NPAS2, BMAL1, BMAL2, PER1, PER2, PER3, CRY1 and CRY2) plays a critical role in rhythm generation, whereas delays imposed by post-translational modifications (PTMs) are important for determining the period (tau) of the rhythms (tau refers to the period of a rhythm and is the length, in time, of one complete cycle). A diurnal rhythm is synchronized with the day/night cycle, while the ultradian and infradian rhythms have a period shorter and longer than 24 hours, respectively. Disruptions in the circadian rhythms contribute to the pathology of cardiovascular diseases, cancer, metabolic syndrome and aging. A transcription/translation feedback loop (TTFL) forms the core of the molecular circadian clock mechanism. Transcription factors, CLOCK or NPAS2 and BMAL1 or BMAL2, form the positive limb of the feedback loop, act in the form of a heterodimer and activate the transcription of core clock genes and clock-controlled genes (involved in key metabolic processes), harboring E-box elements (5'-CACGTG-3') within their promoters. The core clock genes: PER1/2/3 and CRY1/2 which are transcriptional repressors form the negative limb of the feedback loop and interact with the CLOCK|NPAS2-BMAL1|BMAL2 heterodimer inhibiting its activity and thereby negatively regulating their own expression. This heterodimer also activates nuclear receptors NR1D1/2 and RORA/B/G, which form a second feedback loop and which activate and repress BMAL1 transcription, respectively. PER1 and PER2 proteins transport CRY1 and CRY2 into the nucleus with appropriate circadian timing, but also contribute directly to repression of clock-controlled target genes through interaction with several classes of RNA-binding proteins, helicases and others transcriptional repressors. PER appears to regulate circadian control of transcription by at least three different modes. First, interacts directly with the CLOCK-BMAL1 at the tail end of the nascent transcript peak to recruit complexes containing the SIN3-HDAC that remodel chromatin to repress transcription. Second, brings H3K9 methyltransferases such as SUV39H1 and SUV39H2 to the E-box elements of the circadian target genes, like PER2 itself or PER1. The recruitment of each repressive modifier to the DNA seems to be very precisely temporally orchestrated by the large PER complex, the deacetylases acting before than the methyltransferases. Additionally, large PER complexes are also recruited to the target genes 3' termination site through interactions with RNA-binding proteins and helicases that may play a role in transcription termination to regulate transcription independently of CLOCK-BMAL1 interactions. Recruitment of large PER complexes to the elongating polymerase at PER and CRY termination sites inhibited SETX action, impeding RNA polymerase II release and thereby repressing transcriptional reinitiation. May propagate clock information to metabolic pathways via the interaction with nuclear receptors. Coactivator of PPARA and corepressor of NR1D1, binds rhythmically at the promoter of nuclear receptors target genes like BMAL1 or G6PC1. Directly and specifically represses PPARG proadipogenic activity by blocking PPARG recruitment to target promoters and thereby transcriptional activation. Required for fatty acid and lipid metabolism, is involved as well in the regulation of circulating insulin levels. Plays an important role in the maintenance of cardiovascular functions through the regulation of NO and vasodilatatory prostaglandins production in aortas. Controls circadian glutamate uptake in synaptic vesicles through the regulation of VGLUT1 expression. May also be involved in the regulation of inflammatory processes. Represses the CLOCK-BMAL1 induced transcription of BHLHE40/DEC1 and ATF4. Negatively regulates the formation of the TIMELESS-CRY1 complex by competing with TIMELESS for binding to CRY1. The polypeptide is Period circadian protein homolog 2 (PER2) (Spalax judaei (Judean Mountains blind mole rat)).